Reading from the N-terminus, the 270-residue chain is Glutamate 5-kinase (270 aa).

Lys-17 contacts ATP. Substrate is bound by residues Ser-57, Asp-144, and Asn-160. ATP is bound by residues 180 to 181 and 222 to 228; these read SD and TGGMTSK.

The protein belongs to the glutamate 5-kinase family.

The protein resides in the cytoplasm. It catalyses the reaction L-glutamate + ATP = L-glutamyl 5-phosphate + ADP. It participates in amino-acid biosynthesis; L-proline biosynthesis; L-glutamate 5-semialdehyde from L-glutamate: step 1/2. Its function is as follows. Catalyzes the transfer of a phosphate group to glutamate to form L-glutamate 5-phosphate. This chain is Glutamate 5-kinase, found in Lactococcus lactis subsp. cremoris (strain SK11).